A 251-amino-acid chain; its full sequence is Small ribosomal subunit protein uS2B (251 aa).

At S2 the chain carries N-acetylserine. A compositionally biased stretch (low complexity) spans 214-225; it reads AVEEASATGATE. The segment at 214–251 is disordered; sequence AVEEASATGATEEATEEATEETTEATEWAEDNTENATW. A compositionally biased stretch (acidic residues) spans 226 to 251; the sequence is EATEEATEETTEATEWAEDNTENATW.

It belongs to the universal ribosomal protein uS2 family. As to quaternary structure, component of the small ribosomal subunit. Mature ribosomes consist of a small (40S) and a large (60S) subunit. The 40S subunit contains about 33 different proteins and 1 molecule of RNA (18S). The 60S subunit contains about 49 different proteins and 3 molecules of RNA (25S, 5.8S and 5S). Interacts with RPS21.

It localises to the cytoplasm. In terms of biological role, required for the assembly and/or stability of the 40S ribosomal subunit. Required for the processing of the 20S rRNA-precursor to mature 18S rRNA in a late step of the maturation of 40S ribosomal subunits. The sequence is that of Small ribosomal subunit protein uS2B from Vanderwaltozyma polyspora (strain ATCC 22028 / DSM 70294 / BCRC 21397 / CBS 2163 / NBRC 10782 / NRRL Y-8283 / UCD 57-17) (Kluyveromyces polysporus).